A 616-amino-acid polypeptide reads, in one-letter code: MALLQISEPGLSAAPHQRRLAAGIDLGTTNSLVATVRSGQAETLPDHQGRYLLPSVVNYHASGLTVGYDARLNAAQDPANTISSVKRMMGRSLADIQNRYPHLPYQLQASENGLPMIQTAGGLLNPIRVSADILKALAARATEALAGELDGVVITVPAYFDDAQRQGTKDAARLAGLHVLRLLNEPTAAAIAYGLDSGQEGVIAVYDLGGGTFDISILRLSRGVFEVLATGGDSALGGDDFDHLLADYLREQAGFSDRSDNRLQRELLDAAIAAKIALSDAEAAHVEVGGWQGDITRSQFNDLIAPLVKRTLMACRRALKDAGVEAQEVLEVVMVGGSTRVPLVRERVGEFFGRTPLTSIDPDKVVAIGAAIQADILVGNKPDSELLLLDVIPLSLGLETMGGLVEKVIPRNTTIPVARAQEFTTFKDGQTAMSIHVMQGERELVQDCRSLARFALRGIPALPAGGAHIRVTFQVDADGLLSVTAMEKSTGVEASIQVKPSYGLTDGEIATMIKDSMSYAEQDIQARMLAEQKVEAARVLESLTSALAADAALLSAAERQAIDAAAEQVRAAAAGDDADAIKEAIKNIDTQTQEFAARRMDQSVRIALKGQSVDEV.

Belongs to the heat shock protein 70 family.

In terms of biological role, chaperone involved in the maturation of iron-sulfur cluster-containing proteins. Has a low intrinsic ATPase activity which is markedly stimulated by HscB. Involved in the maturation of IscU. The chain is Chaperone protein HscA from Klebsiella pneumoniae subsp. pneumoniae (strain ATCC 700721 / MGH 78578).